Reading from the N-terminus, the 91-residue chain is HssA/B-like protein 24 (91 aa).

It belongs to the hssA/B family.

In Dictyostelium discoideum (Social amoeba), this protein is HssA/B-like protein 24 (hssl24).